A 333-amino-acid polypeptide reads, in one-letter code: Glycerol-3-phosphate dehydrogenase [NAD(P)+] (333 aa).

NADPH-binding residues include Ser-10, Trp-11, His-31, Arg-32, and Lys-105. The sn-glycerol 3-phosphate site is built by Lys-105, Gly-136, and Ser-138. Residue Ala-140 participates in NADPH binding. Sn-glycerol 3-phosphate-binding residues include Lys-191, Asp-244, Ser-254, Arg-255, and Asn-256. Lys-191 serves as the catalytic Proton acceptor. Arg-255 provides a ligand contact to NADPH. NADPH contacts are provided by Val-279 and Glu-281.

Belongs to the NAD-dependent glycerol-3-phosphate dehydrogenase family.

Its subcellular location is the cytoplasm. It carries out the reaction sn-glycerol 3-phosphate + NAD(+) = dihydroxyacetone phosphate + NADH + H(+). The enzyme catalyses sn-glycerol 3-phosphate + NADP(+) = dihydroxyacetone phosphate + NADPH + H(+). It functions in the pathway membrane lipid metabolism; glycerophospholipid metabolism. Its function is as follows. Catalyzes the reduction of the glycolytic intermediate dihydroxyacetone phosphate (DHAP) to sn-glycerol 3-phosphate (G3P), the key precursor for phospholipid synthesis. The chain is Glycerol-3-phosphate dehydrogenase [NAD(P)+] from Chlorobium limicola (strain DSM 245 / NBRC 103803 / 6330).